A 292-amino-acid chain; its full sequence is 4-diphosphocytidyl-2-C-methyl-D-erythritol kinase (292 aa).

K20 is an active-site residue. Residue 103–113 (PMGGGIGGGSS) coordinates ATP. Residue D145 is part of the active site.

It belongs to the GHMP kinase family. IspE subfamily.

It catalyses the reaction 4-CDP-2-C-methyl-D-erythritol + ATP = 4-CDP-2-C-methyl-D-erythritol 2-phosphate + ADP + H(+). The protein operates within isoprenoid biosynthesis; isopentenyl diphosphate biosynthesis via DXP pathway; isopentenyl diphosphate from 1-deoxy-D-xylulose 5-phosphate: step 3/6. Catalyzes the phosphorylation of the position 2 hydroxy group of 4-diphosphocytidyl-2C-methyl-D-erythritol. The chain is 4-diphosphocytidyl-2-C-methyl-D-erythritol kinase from Cupriavidus metallidurans (strain ATCC 43123 / DSM 2839 / NBRC 102507 / CH34) (Ralstonia metallidurans).